An 86-amino-acid chain; its full sequence is Large ribosomal subunit protein bL27 (86 aa).

Residues 1-24 (MATKKAGGSSRNGRDSAGRRLGVK) are disordered.

The protein belongs to the bacterial ribosomal protein bL27 family.

The polypeptide is Large ribosomal subunit protein bL27 (Rickettsia conorii (strain ATCC VR-613 / Malish 7)).